The sequence spans 1166 residues: Poly [ADP-ribose] polymerase tankyrase-2 (1166 aa).

ANK repeat units lie at residues 23–52 (PSAR…VNSR), 57–86 (RKST…NVQA), 90–119 (GGLI…DPNA), and 123–152 (WNYT…EPTI). Position 203 is a (3S)-3-hydroxyasparagine; by HIF1AN (Asn-203). ANK repeat units follow at residues 210-239 (RKST…DVHA), 243-272 (GDLV…CVNA), 276-305 (WQFT…DPTL), 363-395 (THET…NTNE), 399-428 (EFLT…KVNA), 432-461 (LGQT…DPNI), and 463-489 (SLQG…SLGH). His-238 carries the post-translational modification (3S)-3-hydroxyhistidine; by HIF1AN. A (3S)-3-hydroxyasparagine; by HIF1AN modification is found at Asn-271. At Asn-427 the chain carries (3S)-3-hydroxyasparagine; by HIF1AN. A (3S)-3-hydroxyasparagine; by HIF1AN modification is found at Asn-518. ANK repeat units follow at residues 525–554 (RQST…DVHA), 558–587 (GGLV…VVNV), 591–620 (WKFT…DPTK), and 624–652 (DGNT…LLDA). An HIF1AN-binding region spans residues 545–553 (LLQHGADVH). His-553 bears the (3S)-3-hydroxyhistidine; by HIF1AN mark. Asn-586 carries the post-translational modification (3S)-3-hydroxyasparagine; by HIF1AN. (3S)-3-hydroxyasparagine; by HIF1AN occurs at positions 671, 706, and 739. ANK repeat units follow at residues 678–707 (RHST…DVNA), 711–740 (GGLI…CVNA), and 744–773 (WAFT…DPTL). Residues 873–936 (GIDFSITQFI…IKGVERLISG (64 aa)) enclose the SAM domain. The region spanning 959 to 1164 (SPDDKEFQSV…YQIVRPEGMV (206 aa)) is the PARP catalytic domain. 4 residues coordinate Zn(2+): Cys-1081, His-1084, Cys-1089, and Cys-1092.

This sequence belongs to the ARTD/PARP family. As to quaternary structure, oligomerizes and associates with TNKS. Interacts with the cytoplasmic domain of LNPEP/Otase in SLC2A4/GLUT4-vesicles. Binds to the N-terminus of Grb14 and TRF1 with its ankyrin repeat region. Interacts with HIF1AN. Interacts with RNF146; this interaction leads to ubiquitination and proteasomal degradation. Interacts with NUMA1. Post-translationally, ubiquitinated by RNF146 when auto-poly-ADP-ribosylated, leading to its degradation. Deubiquitinated by USP25; leading to stabilization. In terms of processing, ADP-ribosylated (-auto). Poly-ADP-ribosylated protein is recognized by RNF146, followed by ubiquitination.

Its subcellular location is the cytoplasm. It localises to the golgi apparatus membrane. The protein resides in the nucleus. The protein localises to the chromosome. It is found in the telomere. It carries out the reaction NAD(+) + (ADP-D-ribosyl)n-acceptor = nicotinamide + (ADP-D-ribosyl)n+1-acceptor + H(+).. It catalyses the reaction L-aspartyl-[protein] + NAD(+) = 4-O-(ADP-D-ribosyl)-L-aspartyl-[protein] + nicotinamide. The enzyme catalyses L-glutamyl-[protein] + NAD(+) = 5-O-(ADP-D-ribosyl)-L-glutamyl-[protein] + nicotinamide. Functionally, poly-ADP-ribosyltransferase involved in various processes such as Wnt signaling pathway, telomere length and vesicle trafficking. Acts as an activator of the Wnt signaling pathway by mediating poly-ADP-ribosylation of AXIN1 and AXIN2, 2 key components of the beta-catenin destruction complex: poly-ADP-ribosylated target proteins are recognized by RNF146, which mediates their ubiquitination and subsequent degradation. Also mediates poly-ADP-ribosylation of BLZF1 and CASC3, followed by recruitment of RNF146 and subsequent ubiquitination. Mediates poly-ADP-ribosylation of TERF1, thereby contributing to the regulation of telomere length. Stimulates 26S proteasome activity. In Mus musculus (Mouse), this protein is Poly [ADP-ribose] polymerase tankyrase-2.